We begin with the raw amino-acid sequence, 220 residues long: Aklanonic acid methyltransferase DauC (220 aa).

This sequence belongs to the methyltransferase superfamily. DnrC family. Homodimer.

It carries out the reaction aklanonate + S-adenosyl-L-methionine = methyl aklanonate + S-adenosyl-L-homocysteine. It participates in antibiotic biosynthesis; daunorubicin biosynthesis. Its pathway is antibiotic biosynthesis; carminomycin biosynthesis. It functions in the pathway antibiotic biosynthesis; rhodomycin biosynthesis. The protein operates within antibiotic biosynthesis; aclacinomycin biosynthesis. In terms of biological role, involved in the biosynthesis of aklavinone which is an important precursor common to the formation of the clinically significant anthracyclines such as carminomycin, daunorubicin (daunomycin), rhodomycin, aclacinomycin T (aklavin) and aclacinomycin A (aclarubicin). These compounds are aromatic polyketide antibiotics that exhibit high cytotoxicity and are widely applied in the chemotherapy of a variety of cancers. Catalyzes the methyl esterification of aklanonic acid to yield aklanonic acid methyl ester. This Streptomyces sp. (strain C5) protein is Aklanonic acid methyltransferase DauC (dauC).